We begin with the raw amino-acid sequence, 356 residues long: Tyrosine recombinase XerS (356 aa).

Residues 16-121 (LMPWFVLEYY…ALSSLYKYLT (106 aa)) enclose the Core-binding (CB) domain. The Tyr recombinase domain occupies 169 to 354 (KFLDYVENEY…VNDEQKNALD (186 aa)). Catalysis depends on residues R210, K234, H306, R309, and H332. Y341 functions as the O-(3'-phospho-DNA)-tyrosine intermediate in the catalytic mechanism.

This sequence belongs to the 'phage' integrase family. XerS subfamily.

Its subcellular location is the cytoplasm. With respect to regulation, ftsK is required for recombination. Site-specific tyrosine recombinase, which acts by catalyzing the cutting and rejoining of the recombining DNA molecules. Essential to convert dimers of the bacterial chromosome into monomers to permit their segregation at cell division. This is Tyrosine recombinase XerS from Streptococcus thermophilus (strain ATCC BAA-491 / LMD-9).